The primary structure comprises 407 residues: Putative F-box protein At2g16220 (407 aa).

The F-box domain occupies M1–L45. The tract at residues P385–I407 is disordered. The span at E391–I407 shows a compositional bias: acidic residues.

This Arabidopsis thaliana (Mouse-ear cress) protein is Putative F-box protein At2g16220.